The sequence spans 345 residues: N-acetyl-gamma-glutamyl-phosphate reductase (345 aa).

Cys149 is a catalytic residue.

The protein belongs to the NAGSA dehydrogenase family. Type 1 subfamily.

The protein localises to the cytoplasm. It catalyses the reaction N-acetyl-L-glutamate 5-semialdehyde + phosphate + NADP(+) = N-acetyl-L-glutamyl 5-phosphate + NADPH + H(+). Its pathway is amino-acid biosynthesis; L-arginine biosynthesis; N(2)-acetyl-L-ornithine from L-glutamate: step 3/4. Its function is as follows. Catalyzes the NADPH-dependent reduction of N-acetyl-5-glutamyl phosphate to yield N-acetyl-L-glutamate 5-semialdehyde. This is N-acetyl-gamma-glutamyl-phosphate reductase from Janthinobacterium sp. (strain Marseille) (Minibacterium massiliensis).